A 430-amino-acid chain; its full sequence is tRNA(Ile)-lysidine synthase (430 aa).

24 to 29 (SGGLDS) provides a ligand contact to ATP.

The protein belongs to the tRNA(Ile)-lysidine synthase family.

The protein localises to the cytoplasm. The enzyme catalyses cytidine(34) in tRNA(Ile2) + L-lysine + ATP = lysidine(34) in tRNA(Ile2) + AMP + diphosphate + H(+). Its function is as follows. Ligates lysine onto the cytidine present at position 34 of the AUA codon-specific tRNA(Ile) that contains the anticodon CAU, in an ATP-dependent manner. Cytidine is converted to lysidine, thus changing the amino acid specificity of the tRNA from methionine to isoleucine. This chain is tRNA(Ile)-lysidine synthase, found in Haemophilus influenzae (strain PittEE).